We begin with the raw amino-acid sequence, 541 residues long: 5' exonuclease Apollo (541 aa).

Residue Lys-334 forms a Glycyl lysine isopeptide (Lys-Gly) (interchain with G-Cter in SUMO2) linkage. 2 disordered regions span residues 350–375 and 450–489; these read TQGVVFESPEEKADQVKVDRDSKKHK and IGLGSPLWSGGGSGSPTRGKQSNGMGCGSPPTHISRTTHL. The span at 358 to 371 shows a compositional bias: basic and acidic residues; it reads PEEKADQVKVDRDS. The short motif at 492 to 507 is the TBM element; the sequence is ESGGLALKYLLTPVDF.

It belongs to the DNA repair metallo-beta-lactamase (DRMBL) family. In terms of assembly, interacts with TERF2; the interaction is direct. Interacts with MUS81, MRE11 and FANCD2. Interacts with HSPA2, HSPA8 and HSPA14. Interacts with SPAG5. Post-translationally, ubiquitinated, leading to its degradation. Interaction with TERF2 protects it from ubiquitination.

It is found in the chromosome. Its subcellular location is the telomere. It localises to the nucleus. The protein resides in the cytoplasm. The protein localises to the cytoskeleton. It is found in the microtubule organizing center. Its subcellular location is the centrosome. The enzyme catalyses a beta-lactam + H2O = a substituted beta-amino acid. Its function is as follows. 5'-3' exonuclease that plays a central role in telomere maintenance and protection during S-phase. Participates in the protection of telomeres against non-homologous end-joining (NHEJ)-mediated repair, thereby ensuring that telomeres do not fuse. Plays a key role in telomeric loop (T loop) formation by being recruited by TERF2 at the leading end telomeres and by processing leading-end telomeres immediately after their replication via its exonuclease activity: generates 3' single-stranded overhang at the leading end telomeres avoiding blunt leading-end telomeres that are vulnerable to end-joining reactions and expose the telomere end in a manner that activates the DNA repair pathways. Together with TERF2, required to protect telomeres from replicative damage during replication by controlling the amount of DNA topoisomerase (TOP1, TOP2A and TOP2B) needed for telomere replication during fork passage and prevent aberrant telomere topology. Also involved in response to DNA damage: plays a role in response to DNA interstrand cross-links (ICLs) by facilitating double-strand break formation. In case of spindle stress, involved in prophase checkpoint. Possesses beta-lactamase activity, catalyzing the hydrolysis of penicillin G and nitrocefin. Exhibits no activity towards other beta-lactam antibiotic classes including cephalosporins (cefotaxime) and carbapenems (imipenem). This is 5' exonuclease Apollo (Dclre1b) from Rattus norvegicus (Rat).